Reading from the N-terminus, the 166-residue chain is Protein C (166 aa).

Positions Y17–C42 are disordered.

Functionally, may counteract the cellular interferon antiviral system. The protein is Protein C (P/V/C) of Hendra virus (isolate Horse/Autralia/Hendra/1994).